Here is a 185-residue protein sequence, read N- to C-terminus: Thiol:disulfide interchange protein DsbE (185 aa).

The Cytoplasmic portion of the chain corresponds to 1 to 4 (MKRN). Residues 5 to 25 (VLLLPLLIFLLIAAALLWQLA) form a helical membrane-spanning segment. Residues 26 to 185 (RNAQGDDPTN…WDRYSREAAQ (160 aa)) are Periplasmic-facing. Positions 39–177 (ALTGKPVPAF…WESELKPLWD (139 aa)) constitute a Thioredoxin domain. The cysteines at positions 80 and 83 are disulfide-linked.

Belongs to the thioredoxin family. DsbE subfamily.

The protein resides in the cell inner membrane. Its function is as follows. Involved in disulfide bond formation. Catalyzes a late, reductive step in the assembly of periplasmic c-type cytochromes, probably the reduction of disulfide bonds of the apocytochrome c to allow covalent linkage with the heme. Possible subunit of a heme lyase. The sequence is that of Thiol:disulfide interchange protein DsbE (dsbE1) from Salmonella typhimurium (strain LT2 / SGSC1412 / ATCC 700720).